We begin with the raw amino-acid sequence, 237 residues long: Ribonuclease PH (237 aa).

Residues Arg86 and 124–126 contribute to the phosphate site; that span reads GTR.

Belongs to the RNase PH family. As to quaternary structure, homohexameric ring arranged as a trimer of dimers.

It catalyses the reaction tRNA(n+1) + phosphate = tRNA(n) + a ribonucleoside 5'-diphosphate. Phosphorolytic 3'-5' exoribonuclease that plays an important role in tRNA 3'-end maturation. Removes nucleotide residues following the 3'-CCA terminus of tRNAs; can also add nucleotides to the ends of RNA molecules by using nucleoside diphosphates as substrates, but this may not be physiologically important. Probably plays a role in initiation of 16S rRNA degradation (leading to ribosome degradation) during starvation. This Coxiella burnetii (strain RSA 331 / Henzerling II) protein is Ribonuclease PH.